The chain runs to 1415 residues: MKALLDLFKQVQQEEQFDAIKIGLASPEKIRSWSYGEVKKPETINYRTFKPERDGLFCAKIFGPIKDYECLCGKYKRLKHRGVICEKCGVEVTLAKVRRERMGHIELAAPTAHIWFLKSLPSRLGMVLDMTLRDIERVLYFEAFVVLEPGMTPLKKSQIMSEDDYLAKCDEYGEGEFVAMMGAEGIRELLRGIDIEKQIEQIRAELQATGSEAKIKKFAKRLKVLEAFQRSGIKPEWMILEVLPVLPPELRPLVPLDGGRFATSDLNDLYRRVINRNNRLKRLLELKAPEIIVRNEKRMLQEAVDSLLDNGRRGKAMTGANKRPLKSLAEMIKGKGGRFRQNLLGKRVDYSGRSVIVVGPTLKLHQCGLPKLMALELFKPFIFHKLETMGIATTIKAAKKEVESQTPVVWDILEEVIREHPVMLNRAPTLHRLGIQAFEPVLIEGKAIQLHPLVCAAFNADFDGDQMAVHVPLSLEAQMEARTLMLASNNVLFPANGDPSIVPSQDVVLGLYYTTRDKINGKGEGMTFADISEVIRAYENKEVELASRVNVRITEYELVDKDAEGDARFAPKITLQATTVGRAILSEILPKGLPFSVLNKPLKKKEISRLINTAFRKCGLRETVIFADKLLQSGFRLATRAGISIAIDDMLVPPAKEKIISEASAKVKEYDKQYMSGLVTDQERYNNVVDIWGAAGDQVGKAMMEQLQHEDVVDRNGNTVKQESFNSIYMMADSGARGSAAQIRQLAGMRGLMAKPDGSIIETPITANFREGLNVLQYFISTHGARKGLADTALKTANSGYLTRRLVDVTQDLVVVEDDCGTSNGVAMKALVEGGEVIEALRDRILGRVTVADVVNPETQETAIETGTLLDEDLVDLIDALGVDEVKVRTPLSCDTRYGLCGKCYGRDLGRGVLVNSGEAVGVIAAQSIGEPGTQLTMRTFHIGGAASRAAVASSVEAKATGTVRFTVTMRYVTNAKGELIVISRSGEALITDDHGRERERHKIPYGATLLVQDGQAIKAGTQLATWDALTRPIVSEYTGTTKFENVEEGVTVAKQMDEVTGLSTLVVIDAKRRTAATKGIRPQVKLLDANGQEVKIPGTDHSVTIGFQVGALITVKDGQQVHVGEVLARIPTESQKTRDITGGLPRVAELFEARSPKDAAVLAEVTGTTSFGKDTKGKQRLVITDLDGNAHEFLIAKEKQVLVHDGQVVNKGEMIVEGPADPHDILRLKGIEELAHYIVDEVQDVYRLQGVKINDKHIEVIVRQMLRRVQVADVGDTKFIPGEQVERSELLDENDRVIAEGKRPATYENLLLGITKASLSTDSFISAASFQETTRVLTEAAIMGKTDDLRGLKENVIVGRLIPAGTGLAYHRARKAREASERERAQAIADEEQSLFIEPPPVVQATTEGEGDNA.

Residues C70, C72, C85, and C88 each contribute to the Zn(2+) site. Residues D461, D463, and D465 each coordinate Mg(2+). Residues C820, C894, C901, and C904 each contribute to the Zn(2+) site. The interval 1382 to 1415 is disordered; it reads ERERAQAIADEEQSLFIEPPPVVQATTEGEGDNA.

The protein belongs to the RNA polymerase beta' chain family. As to quaternary structure, the RNAP catalytic core consists of 2 alpha, 1 beta, 1 beta' and 1 omega subunit. When a sigma factor is associated with the core the holoenzyme is formed, which can initiate transcription. Mg(2+) is required as a cofactor. The cofactor is Zn(2+).

It carries out the reaction RNA(n) + a ribonucleoside 5'-triphosphate = RNA(n+1) + diphosphate. DNA-dependent RNA polymerase catalyzes the transcription of DNA into RNA using the four ribonucleoside triphosphates as substrates. This Cupriavidus pinatubonensis (strain JMP 134 / LMG 1197) (Cupriavidus necator (strain JMP 134)) protein is DNA-directed RNA polymerase subunit beta'.